The following is a 361-amino-acid chain: D-malate dehydrogenase [decarboxylating] (361 aa).

Residues D224, D248, and D252 each contribute to the Mn(2+) site.

Belongs to the isocitrate and isopropylmalate dehydrogenases family. Mg(2+) is required as a cofactor. The cofactor is Mn(2+).

Its subcellular location is the cytoplasm. The catalysed reaction is (R)-malate + NAD(+) = pyruvate + CO2 + NADH. In terms of biological role, catalyzes the NAD(+)-dependent oxidative decarboxylation of D-malate into pyruvate. Is essential for aerobic growth on D-malate as the sole carbon source. But is not required for anaerobic D-malate utilization, although DmlA is expressed and active in those conditions. Appears to be not able to use L-tartrate as a substrate for dehydrogenation instead of D-malate. This is D-malate dehydrogenase [decarboxylating] (dmlA) from Escherichia coli (strain K12).